The following is a 367-amino-acid chain: Phosphoribosylaminoimidazole-succinocarboxamide synthase (367 aa).

This sequence belongs to the SAICAR synthetase family.

The catalysed reaction is 5-amino-1-(5-phospho-D-ribosyl)imidazole-4-carboxylate + L-aspartate + ATP = (2S)-2-[5-amino-1-(5-phospho-beta-D-ribosyl)imidazole-4-carboxamido]succinate + ADP + phosphate + 2 H(+). Its pathway is purine metabolism; IMP biosynthesis via de novo pathway; 5-amino-1-(5-phospho-D-ribosyl)imidazole-4-carboxamide from 5-amino-1-(5-phospho-D-ribosyl)imidazole-4-carboxylate: step 1/2. The polypeptide is Phosphoribosylaminoimidazole-succinocarboxamide synthase (Shewanella pealeana (strain ATCC 700345 / ANG-SQ1)).